A 3122-amino-acid chain; its full sequence is Laminin subunit alpha-2 (3122 aa).

The first 22 residues, 1–22, serve as a signal peptide directing secretion; sequence MPGAAGVLLLLLLSGGLGGVQA. A Laminin N-terminal domain is found at 35–286; sequence QQRGLFPAVL…SVKDISVGGM (252 aa). N-linked (GlcNAc...) asparagine glycans are attached at residues N55 and N89. Intrachain disulfides connect C287/C296, C289/C307, C309/C318, C321/C341, C344/C353, and C346/C378. Laminin EGF-like domains lie at 287–343, 344–413, 414–468, and 469–517; these read CICY…ECEA, CNCH…PCQP, CHCD…DCKA, and CNCS…GCDE. An N-linked (GlcNAc...) asparagine glycan is attached at N303. N-linked (GlcNAc...) asparagine glycans are attached at residues N363 and N380. 10 cysteine pairs are disulfide-bonded: C381–C390, C393–C411, C414–C426, C416–C442, C444–C453, C456–C466, C469–C482, C471–C486, C488–C497, and C500–C515. N470 carries an N-linked (GlcNAc...) asparagine glycan. The Laminin EGF-like 5; first part domain maps to 518–527; sequence CFCSGVSNRC. The Laminin IV type A 1 domain occupies 531 to 723; the sequence is YWTYGKIQDM…DGSIAAAVEV (193 aa). The Laminin EGF-like 5; second part domain occupies 724 to 756; sequence CQCPPGYTGSSCESCWPRHRRVNGTIFGGICEP. N-linked (GlcNAc...) asparagine glycosylation occurs at N746. Intrachain disulfides connect C757/C766, C759/C773, C776/C785, C788/C804, C807/C822, C809/C832, C835/C844, C847/C862, C865/C879, C867/C886, C889/C898, C901/C915, C918/C930, C920/C937, C939/C948, C951/C964, C967/C979, C969/C985, C987/C996, C999/C1011, C1014/C1023, C1016/C1030, C1032/C1041, C1044/C1057, C1060/C1072, C1062/C1079, C1081/C1090, C1093/C1103, C1106/C1118, C1108/C1134, C1136/C1145, and C1148/C1163. 8 Laminin EGF-like domains span residues 757 to 806, 807 to 864, 865 to 917, 918 to 966, 967 to 1013, 1014 to 1059, 1060 to 1105, and 1106 to 1165; these read CQCF…DCQP, CACP…SCQP, CQCN…NCQP, CRCN…GCVP, CNCN…GCTA, CECS…GCKA, CNCS…RCNL, and CDCF…GCSS. N-linked (GlcNAc...) asparagine glycosylation occurs at N1061. Positions 1166-1175 constitute a Laminin EGF-like 14; first part domain; the sequence is CYCFGTTTQC. The Laminin IV type A 2 domain maps to 1176–1379; the sequence is SEAKGLIRTW…MTPPADLIEK (204 aa). In terms of domain architecture, Laminin EGF-like 14; second part spans 1380-1419; the sequence is CDCPLGYSGLSCEACLPGFYRLRSQPGGRTPGPTLGTCVP. 12 cysteine pairs are disulfide-bonded: C1420-C1429, C1422-C1436, C1439-C1448, C1451-C1466, C1469-C1484, C1471-C1494, C1497-C1506, C1509-C1524, C1527-C1539, C1529-C1546, C1548-C1557, and C1560-C1571. 3 consecutive Laminin EGF-like domains span residues 1420 to 1468, 1469 to 1526, and 1527 to 1573; these read CQCN…DCQQ, CACP…SCQE, and CECD…ECVF. Residues 1574–2144 are domain II and I; sequence CGDECTGLLL…NQARKQANSI (571 aa). N1597, N1614, N1700, N1810, N1901, N1916, N1920, N2017, N2028, N2045, N2126, and N2240 each carry an N-linked (GlcNAc...) asparagine glycan. The stretch at 1630 to 2150 forms a coiled coil; sequence ERLIQLAEGN…ANSIKVSVSS (521 aa). Laminin G-like domains lie at 2145–2328, 2340–2521, 2526–2710, 2763–2934, and 2939–3110; these read KVSV…CKGC, TIQF…TKGC, VYTV…IGRC, SKQF…VGTC, and QRGT…KALE. Cysteines 2302 and 2328 form a disulfide. N-linked (GlcNAc...) asparagine glycans are attached at residues N2360, N2435, and N2478. C2495 and C2521 are joined by a disulfide. 3 N-linked (GlcNAc...) asparagine glycosylation sites follow: N2551, N2558, and N2648. C2683 and C2710 are disulfide-bonded. Residues N2868 and N2893 are each glycosylated (N-linked (GlcNAc...) asparagine). An intrachain disulfide couples C2909 to C2934. Positions 3043–3060 are enriched in polar residues; the sequence is GNQVEAQSPNPASTSADT. Positions 3043–3063 are disordered; that stretch reads GNQVEAQSPNPASTSADTNDP.

Laminin is a complex glycoprotein, consisting of three different polypeptide chains (alpha, beta, gamma), which are bound to each other by disulfide bonds into a cross-shaped molecule comprising one long and three short arms with globules at each end. Alpha-2 is a subunit of laminin-2 (laminin-211 or merosin), laminin-4 (laminin-221 or S-merosin) and laminin-12 (laminin-213). Interacts with FBLN1, FBLN2 and NID2. As to expression, placenta, striated muscle, peripheral nerve, cardiac muscle, pancreas, lung, spleen, kidney, adrenal gland, skin, testis, meninges, choroid plexus, and some other regions of the brain; not in liver, thymus and bone.

It is found in the secreted. The protein localises to the extracellular space. The protein resides in the extracellular matrix. Its subcellular location is the basement membrane. Functionally, binding to cells via a high affinity receptor, laminin is thought to mediate the attachment, migration and organization of cells into tissues during embryonic development by interacting with other extracellular matrix components. The chain is Laminin subunit alpha-2 (LAMA2) from Homo sapiens (Human).